Reading from the N-terminus, the 364-residue chain is V-type proton ATPase subunit d (364 aa).

Belongs to the V-ATPase V0D/AC39 subunit family. In terms of assembly, V-ATPase is a heteromultimeric enzyme composed of a peripheral catalytic V1 complex (components A to H) attached to an integral membrane V0 proton pore complex (components: a, c, c', c'', d, e, f and VOA1).

It localises to the vacuole membrane. Subunit of the V0 complex of vacuolar(H+)-ATPase (V-ATPase), a multisubunit enzyme composed of a peripheral complex (V1) that hydrolyzes ATP and a membrane integral complex (V0) that translocates protons. V-ATPase is responsible for acidifying and maintaining the pH of intracellular compartments. This subunit is a non-integral membrane component of the membrane pore domain and is required for proper assembly of the V0 sector. Might be involved in the regulated assembly of V1 subunits onto the membrane sector or alternatively may prevent the passage of protons through V0 pores. The protein is V-type proton ATPase subunit d of Neurospora crassa (strain ATCC 24698 / 74-OR23-1A / CBS 708.71 / DSM 1257 / FGSC 987).